The following is a 901-amino-acid chain: HTH-type transcriptional regulator MalT (901 aa).

39–46 (SPAGYGKT) is an ATP binding site. Residues 829–894 (ELIRTSPLTQ…DAVQHAQQLL (66 aa)) enclose the HTH luxR-type domain. The segment at residues 853-872 (NEQIAGELAVAATTIKTHIR) is a DNA-binding region (H-T-H motif).

The protein belongs to the MalT family. In terms of assembly, monomer in solution. Oligomerizes to an active state in the presence of the positive effectors ATP and maltotriose.

Activated by ATP and maltotriose, which are both required for DNA binding. Functionally, positively regulates the transcription of the maltose regulon whose gene products are responsible for uptake and catabolism of malto-oligosaccharides. Specifically binds to the promoter region of its target genes, recognizing a short DNA motif called the MalT box. The chain is HTH-type transcriptional regulator MalT from Salmonella choleraesuis (strain SC-B67).